A 1378-amino-acid polypeptide reads, in one-letter code: DNA-directed RNA polymerase subunit beta (1378 aa).

The protein belongs to the RNA polymerase beta chain family. The RNAP catalytic core consists of 2 alpha, 1 beta, 1 beta' and 1 omega subunit. When a sigma factor is associated with the core the holoenzyme is formed, which can initiate transcription.

The enzyme catalyses RNA(n) + a ribonucleoside 5'-triphosphate = RNA(n+1) + diphosphate. In terms of biological role, DNA-dependent RNA polymerase catalyzes the transcription of DNA into RNA using the four ribonucleoside triphosphates as substrates. The polypeptide is DNA-directed RNA polymerase subunit beta (Mesorhizobium japonicum (strain LMG 29417 / CECT 9101 / MAFF 303099) (Mesorhizobium loti (strain MAFF 303099))).